The following is a 1288-amino-acid chain: 5-oxoprolinase (1288 aa).

Residue threonine 151 is modified to Phosphothreonine. Positions proline 1248–phenylalanine 1272 are disordered. Phosphoserine is present on serine 1265.

It belongs to the oxoprolinase family. As to quaternary structure, homodimer.

Its subcellular location is the cytoplasm. The protein localises to the cytosol. It catalyses the reaction 5-oxo-L-proline + ATP + 2 H2O = L-glutamate + ADP + phosphate + H(+). In terms of biological role, catalyzes the cleavage of 5-oxo-L-proline to form L-glutamate coupled to the hydrolysis of ATP to ADP and inorganic phosphate. In Homo sapiens (Human), this protein is 5-oxoprolinase.